Here is a 202-residue protein sequence, read N- to C-terminus: Securin (202 aa).

A2 is modified (N-acetylalanine). Positions 35–94 are disordered; it reads LDGRSQVSTPRFGKTFDAPPALPKATRKALGTVNRATEKSVKTKGPLKQKQPSFSAKKMT. Residues 61-64 carry the D-box motif; sequence RKAL. 2 consecutive short sequence motifs (TEK-box) follow at residues 71–73 and 94–96; these read TEK. Residues 163–173 carry the SH3-binding motif; that stretch reads PPSPVRMPSPP. S165 carries the post-translational modification Phosphoserine; by CDK1.

Belongs to the securin family. Interacts with RPS10 and DNAJA1. Interacts with the caspase-like ESPL1, and prevents its protease activity probably by covering its active site. Interacts with TP53 and blocks its activity probably by blocking its binding to DNA. Interacts with the Ku 70 kDa subunit of ds-DNA kinase. Interacts with PTTG1IP. In terms of processing, phosphorylated at Ser-165 by CDK1 during mitosis. Phosphorylated in vitro by ds-DNA kinase. Post-translationally, ubiquitinated through 'Lys-11' linkage of ubiquitin moieties by the anaphase promoting complex (APC) at the onset of anaphase, conducting to its degradation. 'Lys-11'-linked ubiquitination is mediated by the E2 ligase UBE2C/UBCH10.

The protein resides in the cytoplasm. The protein localises to the nucleus. Its function is as follows. Regulatory protein, which plays a central role in chromosome stability, in the p53/TP53 pathway, and DNA repair. Probably acts by blocking the action of key proteins. During the mitosis, it blocks Separase/ESPL1 function, preventing the proteolysis of the cohesin complex and the subsequent segregation of the chromosomes. At the onset of anaphase, it is ubiquitinated, conducting to its destruction and to the liberation of ESPL1. Its function is however not limited to a blocking activity, since it is required to activate ESPL1. Negatively regulates the transcriptional activity and related apoptosis activity of TP53. The negative regulation of TP53 may explain the strong transforming capability of the protein when it is overexpressed. May also play a role in DNA repair via its interaction with Ku, possibly by connecting DNA damage-response pathways with sister chromatid separation. This Gorilla gorilla gorilla (Western lowland gorilla) protein is Securin (PTTG1).